Consider the following 289-residue polypeptide: ATP phosphoribosyltransferase (289 aa).

Belongs to the ATP phosphoribosyltransferase family. Long subfamily. It depends on Mg(2+) as a cofactor.

The protein resides in the cytoplasm. The enzyme catalyses 1-(5-phospho-beta-D-ribosyl)-ATP + diphosphate = 5-phospho-alpha-D-ribose 1-diphosphate + ATP. The protein operates within amino-acid biosynthesis; L-histidine biosynthesis; L-histidine from 5-phospho-alpha-D-ribose 1-diphosphate: step 1/9. With respect to regulation, feedback inhibited by histidine. Functionally, catalyzes the condensation of ATP and 5-phosphoribose 1-diphosphate to form N'-(5'-phosphoribosyl)-ATP (PR-ATP). Has a crucial role in the pathway because the rate of histidine biosynthesis seems to be controlled primarily by regulation of HisG enzymatic activity. This is ATP phosphoribosyltransferase from Solibacter usitatus (strain Ellin6076).